The sequence spans 647 residues: Neutral endopeptidase (647 aa).

The region spanning 1-647 (MRRYLAVRGG…LDPEDRITIW (647 aa)) is the Peptidase M13 domain. His-496 contributes to the Zn(2+) binding site. Residue Glu-497 is part of the active site. The Zn(2+) site is built by His-500 and Glu-556. Residue Asp-560 is the Proton donor of the active site.

The protein belongs to the peptidase M13 family. The cofactor is Zn(2+).

This chain is Neutral endopeptidase (pepO), found in Lactobacillus helveticus (Lactobacillus suntoryeus).